A 221-amino-acid chain; its full sequence is Small ribosomal subunit protein uS3 (221 aa).

The KH type-2 domain occupies 39 to 108 (IRKFVKKELF…NILINIVEVK (70 aa)).

It belongs to the universal ribosomal protein uS3 family. Part of the 30S ribosomal subunit. Forms a tight complex with proteins S10 and S14.

Binds the lower part of the 30S subunit head. Binds mRNA in the 70S ribosome, positioning it for translation. In Clostridium botulinum (strain Alaska E43 / Type E3), this protein is Small ribosomal subunit protein uS3.